The sequence spans 104 residues: Large ribosomal subunit protein uL24 (104 aa).

This sequence belongs to the universal ribosomal protein uL24 family. Part of the 50S ribosomal subunit.

Functionally, one of two assembly initiator proteins, it binds directly to the 5'-end of the 23S rRNA, where it nucleates assembly of the 50S subunit. One of the proteins that surrounds the polypeptide exit tunnel on the outside of the subunit. In Pseudomonas fluorescens (strain ATCC BAA-477 / NRRL B-23932 / Pf-5), this protein is Large ribosomal subunit protein uL24.